The sequence spans 296 residues: Haloalkane dehalogenase (296 aa).

The region spanning 31 to 155 (PILFQHGNPT…QDRDLFQAFR (125 aa)) is the AB hydrolase-1 domain. Chloride is bound at residue asparagine 38. Aspartate 108 acts as the Nucleophile in catalysis. Tryptophan 109 contacts chloride. Glutamate 132 serves as the catalytic Proton donor. Histidine 272 acts as the Proton acceptor in catalysis.

The protein belongs to the haloalkane dehalogenase family. Type 2 subfamily. Monomer.

It is found in the periplasm. It carries out the reaction 1-haloalkane + H2O = a halide anion + a primary alcohol + H(+). The enzyme catalyses (3R,6R)-1,3,4,6-tetrachlorocyclohexa-1,4-diene + 2 H2O = 2,5-dichlorocyclohexa-2,5-dien-1,4-diol + 2 chloride + 2 H(+). It functions in the pathway xenobiotic degradation; gamma-hexachlorocyclohexane degradation. Its activity is regulated as follows. Competitively inhibited by the key pollutants 1,2-dichloroethane (1,2-DCE) and 1,2-dichloropropane (1,2-DCP). In terms of biological role, catalyzes hydrolytic cleavage of carbon-halogen bonds in halogenated aliphatic compounds, leading to the formation of the corresponding primary alcohols, halide ions and protons. Has a broad substrate specificity since not only monochloroalkanes (C3 to C10) but also dichloroalkanes (&gt; C3), bromoalkanes, and chlorinated aliphatic alcohols are good substrates. Shows almost no activity with 1,2-dichloroethane, but very high activity with the brominated analog. Is involved in the degradation of the important environmental pollutant gamma-hexachlorocyclohexane (gamma-HCH or lindane) as it also catalyzes conversion of 1,3,4,6-tetrachloro-1,4-cyclohexadiene (1,4-TCDN) to 2,5-dichloro-2,5-cyclohexadiene-1,4-diol (2,5-DDOL) via the intermediate 2,4,5-trichloro-2,5-cyclohexadiene-1-ol (2,4,5-DNOL). This degradation pathway allows S.japonicum UT26 to grow on gamma-HCH as the sole source of carbon and energy. This Sphingobium indicum (strain DSM 16413 / CCM 7287 / MTCC 6362 / UT26 / NBRC 101211 / UT26S) (Sphingobium japonicum) protein is Haloalkane dehalogenase.